Reading from the N-terminus, the 327-residue chain is Undecaprenyl-phosphate 4-deoxy-4-formamido-L-arabinose transferase (327 aa).

Residues 1–235 (MFDAAPIKKV…TCLTTTPLRL (235 aa)) are Cytoplasmic-facing. A helical transmembrane segment spans residues 236-256 (LSLLGSVIAIGGFSLSVLLIV). Residues 257-269 (LRLALGPQWAAEG) are Periplasmic-facing. Residues 270-290 (VFMLFAVLFTFIGAQFIGMGL) traverse the membrane as a helical segment. Residues 291–327 (LGEYIGRIYNDVRARPRYFVQQVIYPESTSFTEESHQ) are Cytoplasmic-facing.

It belongs to the glycosyltransferase 2 family.

It is found in the cell inner membrane. It carries out the reaction UDP-4-deoxy-4-formamido-beta-L-arabinose + di-trans,octa-cis-undecaprenyl phosphate = 4-deoxy-4-formamido-alpha-L-arabinopyranosyl di-trans,octa-cis-undecaprenyl phosphate + UDP. It functions in the pathway glycolipid biosynthesis; 4-amino-4-deoxy-alpha-L-arabinose undecaprenyl phosphate biosynthesis; 4-amino-4-deoxy-alpha-L-arabinose undecaprenyl phosphate from UDP-4-deoxy-4-formamido-beta-L-arabinose and undecaprenyl phosphate: step 1/2. It participates in bacterial outer membrane biogenesis; lipopolysaccharide biosynthesis. In terms of biological role, catalyzes the transfer of 4-deoxy-4-formamido-L-arabinose from UDP to undecaprenyl phosphate. The modified arabinose is attached to lipid A and is required for resistance to polymyxin and cationic antimicrobial peptides. The polypeptide is Undecaprenyl-phosphate 4-deoxy-4-formamido-L-arabinose transferase (Salmonella paratyphi A (strain ATCC 9150 / SARB42)).